Here is a 39-residue protein sequence, read N- to C-terminus: Cytochrome b6-f complex subunit 5 (39 aa).

Residues 5–25 form a helical membrane-spanning segment; the sequence is LLCGIVLGLVPITLLGLFVSA.

Belongs to the PetG family. In terms of assembly, the 4 large subunits of the cytochrome b6-f complex are cytochrome b6, subunit IV (17 kDa polypeptide, PetD), cytochrome f and the Rieske protein, while the 4 small subunits are PetG, PetL, PetM and PetN. The complex functions as a dimer.

The protein localises to the cellular thylakoid membrane. In terms of biological role, component of the cytochrome b6-f complex, which mediates electron transfer between photosystem II (PSII) and photosystem I (PSI), cyclic electron flow around PSI, and state transitions. PetG is required for either the stability or assembly of the cytochrome b6-f complex. The chain is Cytochrome b6-f complex subunit 5 from Prochlorococcus marinus subsp. pastoris (strain CCMP1986 / NIES-2087 / MED4).